The chain runs to 298 residues: uncharacterized protein (298 aa).

This sequence belongs to the NAD(P)-dependent epimerase/dehydratase family.

This is an uncharacterized protein from Saccharomyces cerevisiae (strain ATCC 204508 / S288c) (Baker's yeast).